Reading from the N-terminus, the 492-residue chain is ATP synthase subunit beta, chloroplastic (492 aa).

ATP is bound at residue glycine 170–threonine 177.

The protein belongs to the ATPase alpha/beta chains family. F-type ATPases have 2 components, CF(1) - the catalytic core - and CF(0) - the membrane proton channel. CF(1) has five subunits: alpha(3), beta(3), gamma(1), delta(1), epsilon(1). CF(0) has four main subunits: a(1), b(1), b'(1) and c(9-12).

The protein resides in the plastid. It localises to the chloroplast thylakoid membrane. The catalysed reaction is ATP + H2O + 4 H(+)(in) = ADP + phosphate + 5 H(+)(out). In terms of biological role, produces ATP from ADP in the presence of a proton gradient across the membrane. The catalytic sites are hosted primarily by the beta subunits. The sequence is that of ATP synthase subunit beta, chloroplastic from Pinus thunbergii (Japanese black pine).